The following is a 683-amino-acid chain: Translation initiation factor IF-2 (683 aa).

The tr-type G domain maps to 182-351 (KRPPVVTVMG…ILTAEMEELK (170 aa)). The interval 191–198 (GHVDHGKT) is G1. 191-198 (GHVDHGKT) is a GTP binding site. The tract at residues 216 to 220 (GITQH) is G2. Residues 237–240 (DTPG) form a G3 region. GTP-binding positions include 237–241 (DTPGH) and 291–294 (NKID). The G4 stretch occupies residues 291–294 (NKID). The G5 stretch occupies residues 327–329 (SAH).

The protein belongs to the TRAFAC class translation factor GTPase superfamily. Classic translation factor GTPase family. IF-2 subfamily.

It localises to the cytoplasm. In terms of biological role, one of the essential components for the initiation of protein synthesis. Protects formylmethionyl-tRNA from spontaneous hydrolysis and promotes its binding to the 30S ribosomal subunits. Also involved in the hydrolysis of GTP during the formation of the 70S ribosomal complex. In Clostridium novyi (strain NT), this protein is Translation initiation factor IF-2.